A 127-amino-acid polypeptide reads, in one-letter code: Small ribosomal subunit protein uS11 (127 aa).

Belongs to the universal ribosomal protein uS11 family. Part of the 30S ribosomal subunit. Interacts with proteins S7 and S18. Binds to IF-3.

Its function is as follows. Located on the platform of the 30S subunit, it bridges several disparate RNA helices of the 16S rRNA. Forms part of the Shine-Dalgarno cleft in the 70S ribosome. The polypeptide is Small ribosomal subunit protein uS11 (Streptococcus thermophilus (strain CNRZ 1066)).